The chain runs to 533 residues: 2-isopropylmalate synthase (533 aa).

Residues 8-270 (VIIFDTTLRD…YFNPFLGRPA (263 aa)) enclose the Pyruvate carboxyltransferase domain. Mn(2+) is bound by residues Asp-17, His-209, His-211, and Asn-245. The segment at 409–533 (RLELVQVSCG…KEKTPEMLQV (125 aa)) is regulatory domain.

This sequence belongs to the alpha-IPM synthase/homocitrate synthase family. LeuA type 1 subfamily. As to quaternary structure, homodimer. Mn(2+) serves as cofactor.

Its subcellular location is the cytoplasm. It catalyses the reaction 3-methyl-2-oxobutanoate + acetyl-CoA + H2O = (2S)-2-isopropylmalate + CoA + H(+). The protein operates within amino-acid biosynthesis; L-leucine biosynthesis; L-leucine from 3-methyl-2-oxobutanoate: step 1/4. Its function is as follows. Catalyzes the condensation of the acetyl group of acetyl-CoA with 3-methyl-2-oxobutanoate (2-ketoisovalerate) to form 3-carboxy-3-hydroxy-4-methylpentanoate (2-isopropylmalate). The polypeptide is 2-isopropylmalate synthase (Microcystis aeruginosa).